The primary structure comprises 501 residues: Phosphatase and actin regulator 1 (501 aa).

An RPEL 1 repeat occupies 1–18; it reads MRQSREELIKRGVLKEIF. 2 disordered regions span residues 21 to 46 and 295 to 329; these read DGEL…QVLS and DNKE…EDNS. A compositionally biased stretch (low complexity) spans 36–46; sequence GQPLGSGQVLS. Residues 295-304 are compositionally biased toward basic and acidic residues; it reads DNKENVPHEA. Over residues 317-328 the composition is skewed to acidic residues; the sequence is EEEEEEDEDEDN. RPEL repeat units follow at residues 343-368, 381-406, and 419-444; these read DSLA…PMQT, TKLT…KPRN, and RRLT…IRFS. Residues 382-415 form a disordered region; it reads KLTRRLSQRPTAEELEQRNILKPRNEQEEQEEKR. Positions 392 to 415 are enriched in basic and acidic residues; that stretch reads TAEELEQRNILKPRNEQEEQEEKR.

The protein belongs to the phosphatase and actin regulator family. As to quaternary structure, interacts (via RPEL repeats) with ACTA1. Expressed in the gizzard, and in neurons from central and peripheral nervous systems.

It localises to the cytoplasm. Its subcellular location is the synapse. It is found in the nucleus. Binds actin monomers (G actin) and plays a role in the reorganization of the actin cytoskeleton and in formation of actin stress fibers. The protein is Phosphatase and actin regulator 1 (PHACTR1) of Gallus gallus (Chicken).